The primary structure comprises 197 residues: UPF0056 inner membrane protein YhgN (197 aa).

At 1 to 3 the chain is on the periplasmic side; that stretch reads MNE. The chain crosses the membrane as a helical span at residues 4–24; sequence IISAAVLLILIMDPLGNLPIF. At 25 to 44 the chain is on the cytoplasmic side; it reads MSVLKHTEPKRRRAIMVREL. Residues 45-65 form a helical membrane-spanning segment; the sequence is LIALLVMLVFLFAGEKILAFL. Topologically, residues 66 to 71 are periplasmic; that stretch reads SLRAET. A helical transmembrane segment spans residues 72–92; the sequence is VSISGGIILFLIAIKMIFPSA. The Cytoplasmic segment spans residues 93 to 105; the sequence is SGNSSGLPAGEEP. The chain crosses the membrane as a helical span at residues 106-126; that stretch reads FIVPLAIPLVAGPTILATLML. The Periplasmic portion of the chain corresponds to 127–138; that stretch reads LSHQYPNQMGHL. Residues 139 to 159 form a helical membrane-spanning segment; it reads VIALLLAWGGTFVILLQSSLF. Topologically, residues 160–173 are cytoplasmic; it reads LRLLGEKGVNALER. A helical membrane pass occupies residues 174 to 194; that stretch reads LMGLILVMMATQMFLDGIRMW. Topologically, residues 195 to 197 are periplasmic; it reads MKG.

This sequence belongs to the UPF0056 (MarC) family.

It localises to the cell inner membrane. The chain is UPF0056 inner membrane protein YhgN (yhgN) from Escherichia coli O157:H7.